The chain runs to 638 residues: Threonine--tRNA ligase (638 aa).

One can recognise a TGS domain in the interval 1–61 (MPLITLPDGN…DKDCSVKIFT (61 aa)). The segment at 243 to 535 (DHRKLGKEMD…LIENYAGKFP (293 aa)) is catalytic. Residues Cys-335, His-386, and His-512 each coordinate Zn(2+).

Belongs to the class-II aminoacyl-tRNA synthetase family. In terms of assembly, homodimer. Zn(2+) is required as a cofactor.

It is found in the cytoplasm. It catalyses the reaction tRNA(Thr) + L-threonine + ATP = L-threonyl-tRNA(Thr) + AMP + diphosphate + H(+). Functionally, catalyzes the attachment of threonine to tRNA(Thr) in a two-step reaction: L-threonine is first activated by ATP to form Thr-AMP and then transferred to the acceptor end of tRNA(Thr). Also edits incorrectly charged L-seryl-tRNA(Thr). The polypeptide is Threonine--tRNA ligase (Pelagibacter ubique (strain HTCC1062)).